Reading from the N-terminus, the 42-residue chain is Photosystem I reaction center subunit IX (42 aa).

A helical transmembrane segment spans residues 7-27 (YLSTAPVLATLWFGFLAGLLI).

The protein belongs to the PsaJ family.

It localises to the plastid. The protein localises to the chloroplast thylakoid membrane. In terms of biological role, may help in the organization of the PsaE and PsaF subunits. In Psilotum nudum (Whisk fern), this protein is Photosystem I reaction center subunit IX.